The primary structure comprises 122 residues: Small ribosomal subunit protein bS16 (122 aa).

The disordered stretch occupies residues 87 to 122 (AQSNPKKALPKKKAQERAAASAAAAEKAAAAAAPEA). Low complexity predominate over residues 103-122 (RAAASAAAAEKAAAAAAPEA).

Belongs to the bacterial ribosomal protein bS16 family.

The polypeptide is Small ribosomal subunit protein bS16 (Methylocella silvestris (strain DSM 15510 / CIP 108128 / LMG 27833 / NCIMB 13906 / BL2)).